The primary structure comprises 71 residues: DNA-directed RNA polymerase subunit epsilon (71 aa).

Belongs to the RNA polymerase subunit epsilon family. In terms of assembly, RNAP is composed of a core of 2 alpha, a beta and a beta' subunit. The core is associated with a delta subunit, and at least one of epsilon or omega. When a sigma factor is associated with the core the holoenzyme is formed, which can initiate transcription.

The enzyme catalyses RNA(n) + a ribonucleoside 5'-triphosphate = RNA(n+1) + diphosphate. A non-essential component of RNA polymerase (RNAP). In Anoxybacillus flavithermus (strain DSM 21510 / WK1), this protein is DNA-directed RNA polymerase subunit epsilon.